The primary structure comprises 476 residues: Glycogen synthase (476 aa).

K15 lines the ADP-alpha-D-glucose pocket.

This sequence belongs to the glycosyltransferase 1 family. Bacterial/plant glycogen synthase subfamily.

It catalyses the reaction [(1-&gt;4)-alpha-D-glucosyl](n) + ADP-alpha-D-glucose = [(1-&gt;4)-alpha-D-glucosyl](n+1) + ADP + H(+). Its pathway is glycan biosynthesis; glycogen biosynthesis. Its function is as follows. Synthesizes alpha-1,4-glucan chains using ADP-glucose. The polypeptide is Glycogen synthase (Lactobacillus acidophilus (strain ATCC 700396 / NCK56 / N2 / NCFM)).